Here is a 769-residue protein sequence, read N- to C-terminus: Metal transporter CNNM4 (769 aa).

Residues 1–175 (MAASAGCYYG…RLRVLEEEKP (175 aa)) lie on the Extracellular side of the membrane. N-linked (GlcNAc...) asparagine glycans are attached at residues Asn99 and Asn115. The 181-residue stretch at 175–355 (PLLPIWLQAC…EPYSGIVREE (181 aa)) folds into the CNNM transmembrane domain. A helical transmembrane segment spans residues 176 to 196 (LLPIWLQACIIAVLLTLSGIF). Residues 197–237 (SGLNLGLMALDPMELRVVQRCGTEKEKRYASKIEPVRRKGN) lie on the Cytoplasmic side of the membrane. The segment at residues 238–258 (YLLCSLLLGNVLVNTTLTALL) is an intramembrane region (helical). Over 259-261 (DEL) the chain is Cytoplasmic. A helical membrane pass occupies residues 262 to 282 (IGSGLAAVLASTTGIVVLGEI). Topologically, residues 283–292 (VPQALCSRHG) are extracellular. A helical membrane pass occupies residues 293–313 (LAVGANTLWLTRIFMLLTFPV). The Cytoplasmic segment spans residues 314–769 (AYPVSRLLDC…SQHSLQHNAV (456 aa)). 2 CBS domains span residues 374–435 (MTKV…CTPL) and 442–508 (YSHP…ILDE). The segment at 717-769 (LMSSRLDSSPQSPEGGTRKPDSTLSERSEVLEDETTSLLNQRNSQHSLQHNAV) is disordered. Residues 721 to 730 (RLDSSPQSPE) show a composition bias toward polar residues. The segment covering 732 to 746 (GTRKPDSTLSERSEV) has biased composition (basic and acidic residues). Positions 752-769 (TSLLNQRNSQHSLQHNAV) are enriched in polar residues.

The protein belongs to the ACDP family.

The protein resides in the cell membrane. Its function is as follows. Probable metal transporter. The polypeptide is Metal transporter CNNM4 (cnnm4) (Xenopus tropicalis (Western clawed frog)).